The chain runs to 185 residues: Ribosome-recycling factor (185 aa).

The protein belongs to the RRF family.

It is found in the cytoplasm. In terms of biological role, responsible for the release of ribosomes from messenger RNA at the termination of protein biosynthesis. May increase the efficiency of translation by recycling ribosomes from one round of translation to another. The chain is Ribosome-recycling factor from Glaesserella parasuis serovar 5 (strain SH0165) (Haemophilus parasuis).